The sequence spans 349 residues: Protein-glutamate methylesterase/protein-glutamine glutaminase 1 (349 aa).

Positions 2–119 (RTLIVDDSAF…DVNKAEKELV (118 aa)) constitute a Response regulatory domain. Asp-53 is modified (4-aspartylphosphate). The region spanning 158–345 (ILIGSSTGGP…EEIVKRLEAK (188 aa)) is the CheB-type methylesterase domain. Catalysis depends on residues Ser-163, His-190, and Asp-287.

The protein belongs to the CheB family. Post-translationally, phosphorylated by CheA. Phosphorylation of the N-terminal regulatory domain activates the methylesterase activity.

The protein resides in the cytoplasm. It catalyses the reaction [protein]-L-glutamate 5-O-methyl ester + H2O = L-glutamyl-[protein] + methanol + H(+). It carries out the reaction L-glutaminyl-[protein] + H2O = L-glutamyl-[protein] + NH4(+). Its function is as follows. Involved in chemotaxis. Part of a chemotaxis signal transduction system that modulates chemotaxis in response to various stimuli. Catalyzes the demethylation of specific methylglutamate residues introduced into the chemoreceptors (methyl-accepting chemotaxis proteins or MCP) by CheR. Also mediates the irreversible deamidation of specific glutamine residues to glutamic acid. The polypeptide is Protein-glutamate methylesterase/protein-glutamine glutaminase 1 (Methanosarcina acetivorans (strain ATCC 35395 / DSM 2834 / JCM 12185 / C2A)).